The sequence spans 394 residues: Cell adhesion molecule 3 (394 aa).

The signal sequence occupies residues 1 to 17 (MHHPVILLLCLSSLAGA). Residues 18 to 326 (ANLPPEDLSQ…PIPSTSSIDH (309 aa)) lie on the Extracellular side of the membrane. The Ig-like V-type domain maps to 22-120 (PEDLSQPVTA…PVRTAKAVVT (99 aa)). 2 cysteine pairs are disulfide-bonded: Cys-45-Cys-105 and Cys-147-Cys-204. 2 consecutive Ig-like C2-type domains span residues 128–223 (PQVS…HKIQ) and 228–306 (PTAK…TFIT). The segment at 217–240 (SSSHKIQVQYKPTAKIESRPSMPR) is disordered. Basic and acidic residues predominate over residues 230–240 (AKIESRPSMPR). Residues Cys-249 and Cys-295 are joined by a disulfide bond. The chain crosses the membrane as a helical span at residues 327–347 (AVIGGVVAVIAFLLFCLLIVL). The Cytoplasmic segment spans residues 348–394 (GRYLIRHKGTYLTHEAKGSDDAPDADTAIINAEGGQGGSDDKKEYFI). The disordered stretch occupies residues 363–394 (AKGSDDAPDADTAIINAEGGQGGSDDKKEYFI).

The protein belongs to the nectin family.

The protein localises to the cell membrane. Its subcellular location is the cell junction. Functionally, may be involved in cell-cell adhesion. The polypeptide is Cell adhesion molecule 3 (cadm3) (Xenopus laevis (African clawed frog)).